The primary structure comprises 166 residues: Calmodulin-like protein 5 (166 aa).

EF-hand domains lie at 11–46 (EQVA…LGQT), 47–82 (PTRE…KASR), 96–131 (AADE…LGEK), and 132–166 (LTDE…LSDQ). Ca(2+) is bound by residues Asp24, Asp26, Asp28, Cys30, Glu35, Asp60, Asp62, Asn64, Thr66, Glu71, Asp109, Asp111, Asp113, and Glu120. Lys131 bears the N6,N6,N6-trimethyllysine mark. Ca(2+) contacts are provided by Asp145, Asp147, Asp149, Gln151, and Glu156.

Belongs to the calmodulin family.

In terms of biological role, potential calcium sensor. The sequence is that of Calmodulin-like protein 5 (CML5) from Oryza sativa subsp. japonica (Rice).